We begin with the raw amino-acid sequence, 72 residues long: Conotoxin Gla(2)-TxVI/A (72 aa).

The N-terminal stretch at 1 to 19 (MQKLIILLLVAAVLMSTQA) is a signal peptide. Residues 20 to 44 (LFQEKRPMKKIDFLSKGKTDAEKQQ) constitute a propeptide that is removed on maturation. 3 disulfides stabilise this stretch: C48/C62, C55/C66, and C61/C70. E56 carries the 4-carboxyglutamate modification. P58 is modified (4-hydroxyproline). Residue S71 is modified to Serine amide.

The protein belongs to the conotoxin O2 superfamily. Brominated at one of the Trp residues. As to expression, expressed by the venom duct.

The protein localises to the secreted. This is Conotoxin Gla(2)-TxVI/A from Conus textile (Cloth-of-gold cone).